The following is a 508-amino-acid chain: Photosystem II CP47 reaction center protein (508 aa).

The next 6 membrane-spanning stretches (helical) occupy residues 21 to 36, 101 to 115, 140 to 156, 203 to 218, 237 to 252, and 457 to 472; these read SVHIMHTALVAGWAGS, IVFSGLCFLAAIWHW, GIHLFLSGVACFGFGAF, IAAGTLGILAGLFHLS, VLSSSIAAVFFAAFVV, and SFALLFFFGHIWHGAR.

The protein belongs to the PsbB/PsbC family. PsbB subfamily. As to quaternary structure, PSII is composed of 1 copy each of membrane proteins PsbA, PsbB, PsbC, PsbD, PsbE, PsbF, PsbH, PsbI, PsbJ, PsbK, PsbL, PsbM, PsbT, PsbX, PsbY, PsbZ, Psb30/Ycf12, at least 3 peripheral proteins of the oxygen-evolving complex and a large number of cofactors. It forms dimeric complexes. Requires Binds multiple chlorophylls. PSII binds additional chlorophylls, carotenoids and specific lipids. as cofactor.

It is found in the plastid. It localises to the chloroplast thylakoid membrane. In terms of biological role, one of the components of the core complex of photosystem II (PSII). It binds chlorophyll and helps catalyze the primary light-induced photochemical processes of PSII. PSII is a light-driven water:plastoquinone oxidoreductase, using light energy to abstract electrons from H(2)O, generating O(2) and a proton gradient subsequently used for ATP formation. This Acorus calamus var. americanus (American sweet flag) protein is Photosystem II CP47 reaction center protein.